The primary structure comprises 154 residues: Large ribosomal subunit protein uL30 (154 aa).

The tract at residues 122 to 141 is disordered; the sequence is RGGHDGIKTPASDGGQLGKH.

The protein belongs to the universal ribosomal protein uL30 family. As to quaternary structure, part of the 50S ribosomal subunit.

This Halobacterium salinarum (strain ATCC 29341 / DSM 671 / R1) protein is Large ribosomal subunit protein uL30.